The sequence spans 155 residues: 2-C-methyl-D-erythritol 2,4-cyclodiphosphate synthase (155 aa).

The a divalent metal cation site is built by Asp-8 and His-10. 4-CDP-2-C-methyl-D-erythritol 2-phosphate-binding positions include 8–10 (DVH) and 34–35 (HS). His-42 contributes to the a divalent metal cation binding site. 4-CDP-2-C-methyl-D-erythritol 2-phosphate is bound by residues 56–58 (DIG), 61–65 (FPDTD), 100–106 (AQAPKMA), 132–135 (TTTE), Phe-139, and Arg-142.

It belongs to the IspF family. As to quaternary structure, homotrimer. The cofactor is a divalent metal cation.

It carries out the reaction 4-CDP-2-C-methyl-D-erythritol 2-phosphate = 2-C-methyl-D-erythritol 2,4-cyclic diphosphate + CMP. It functions in the pathway isoprenoid biosynthesis; isopentenyl diphosphate biosynthesis via DXP pathway; isopentenyl diphosphate from 1-deoxy-D-xylulose 5-phosphate: step 4/6. Functionally, involved in the biosynthesis of isopentenyl diphosphate (IPP) and dimethylallyl diphosphate (DMAPP), two major building blocks of isoprenoid compounds. Catalyzes the conversion of 4-diphosphocytidyl-2-C-methyl-D-erythritol 2-phosphate (CDP-ME2P) to 2-C-methyl-D-erythritol 2,4-cyclodiphosphate (ME-CPP) with a corresponding release of cytidine 5-monophosphate (CMP). The polypeptide is 2-C-methyl-D-erythritol 2,4-cyclodiphosphate synthase (Saccharophagus degradans (strain 2-40 / ATCC 43961 / DSM 17024)).